Reading from the N-terminus, the 229-residue chain is 2-C-methyl-D-erythritol 4-phosphate cytidylyltransferase (229 aa).

The protein belongs to the IspD/TarI cytidylyltransferase family. IspD subfamily.

The enzyme catalyses 2-C-methyl-D-erythritol 4-phosphate + CTP + H(+) = 4-CDP-2-C-methyl-D-erythritol + diphosphate. Its pathway is isoprenoid biosynthesis; isopentenyl diphosphate biosynthesis via DXP pathway; isopentenyl diphosphate from 1-deoxy-D-xylulose 5-phosphate: step 2/6. Catalyzes the formation of 4-diphosphocytidyl-2-C-methyl-D-erythritol from CTP and 2-C-methyl-D-erythritol 4-phosphate (MEP). The polypeptide is 2-C-methyl-D-erythritol 4-phosphate cytidylyltransferase (Neisseria meningitidis serogroup A / serotype 4A (strain DSM 15465 / Z2491)).